Here is a 210-residue protein sequence, read N- to C-terminus: MSLSRTQIVNWLTRCGDIFSTESEYLTGLDREIGDADHGLNMNRGFSKVVEKLPAIADKDIGFILKNTGMTLLSSVGGASGPLFGTFFIRAAQATQARQSLTLEELYQMFRDGADGVISRGKAEPGDKTMCDVWVPVVESLRQSSEQNLSVPVALEAASSIAESAAQSTITMQARKGRASYLGERSIGHQDPGATSVMFMMQMLALAAKE.

A DhaL domain is found at 6–206 (TQIVNWLTRC…VMFMMQMLAL (201 aa)). 3 residues coordinate Mg(2+): D30, D35, and D37. ADP contacts are provided by residues 38-41 (HGLN), 79-80 (AS), G121, M130, R178, and 191-193 (DPG).

In terms of assembly, homodimer. The dihydroxyacetone kinase complex is composed of a homodimer of DhaM, a homodimer of DhaK and the subunit DhaL. DhaL also forms a complex with DhaR. It depends on Mg(2+) as a cofactor.

The protein resides in the cytoplasm. The catalysed reaction is dihydroxyacetone + phosphoenolpyruvate = dihydroxyacetone phosphate + pyruvate. The protein operates within polyol metabolism; glycerol degradation. In terms of biological role, ADP-binding subunit of the dihydroxyacetone kinase, which is responsible for the phosphoenolpyruvate (PEP)-dependent phosphorylation of dihydroxyacetone. DhaL-ADP is converted to DhaL-ATP via a phosphoryl group transfer from DhaM and transmits it to dihydroxyacetone bound to DhaK. DhaL also acts as coactivator of the transcription activator DhaR by binding to the sensor domain of DhaR. In the presence of dihydroxyacetone, DhaL-ADP displaces DhaK and stimulates DhaR activity. In the absence of dihydroxyacetone, DhaL-ADP is converted by the PTS to DhaL-ATP, which does not bind to DhaR. This Escherichia coli (strain K12) protein is PEP-dependent dihydroxyacetone kinase, ADP-binding subunit DhaL.